We begin with the raw amino-acid sequence, 186 residues long: Elongation factor P (186 aa).

Belongs to the elongation factor P family.

Its subcellular location is the cytoplasm. It functions in the pathway protein biosynthesis; polypeptide chain elongation. In terms of biological role, involved in peptide bond synthesis. Stimulates efficient translation and peptide-bond synthesis on native or reconstituted 70S ribosomes in vitro. Probably functions indirectly by altering the affinity of the ribosome for aminoacyl-tRNA, thus increasing their reactivity as acceptors for peptidyl transferase. The protein is Elongation factor P of Brucella abortus (strain S19).